A 427-amino-acid chain; its full sequence is 5-hydroxybenzimidazole synthase BzaA (427 aa).

This sequence belongs to the ThiC family. 5-hydroxybenzimidazole synthase subfamily. [4Fe-4S] cluster serves as cofactor.

The enzyme catalyses 5-amino-1-(5-phospho-beta-D-ribosyl)imidazole + AH2 + S-adenosyl-L-methionine = 5-hydroxybenzimidazole + 5'-deoxyadenosine + formate + L-methionine + A + NH4(+) + phosphate + 2 H(+). It functions in the pathway cofactor biosynthesis; adenosylcobalamin biosynthesis. Together with BzaB, catalyzes the conversion of aminoimidazole ribotide (AIR) to 5-hydroxybenzimidazole (5-HBI) in a radical S-adenosyl-L-methionine (SAM)-dependent reaction. Is thus involved in the anaerobic biosynthesis of dimethylbenzimidazole (DMB), the lower axial ligand of vitamin B12 (cobalamin). Requires BzaB for catalytic activity, as BzaA alone displays no activity. This Eubacterium limosum protein is 5-hydroxybenzimidazole synthase BzaA.